We begin with the raw amino-acid sequence, 940 residues long: UvrABC system protein A (940 aa).

Position 31–38 (glycine 31–serine 38) interacts with ATP. The C4-type zinc finger occupies cysteine 253–cysteine 280. 2 consecutive ABC transporter domains span residues tryptophan 310–leucine 587 and alanine 607–lysine 937. Position 640–647 (glycine 640–serine 647) interacts with ATP. The C4-type zinc-finger motif lies at cysteine 740–cysteine 766.

This sequence belongs to the ABC transporter superfamily. UvrA family. As to quaternary structure, forms a heterotetramer with UvrB during the search for lesions.

The protein localises to the cytoplasm. In terms of biological role, the UvrABC repair system catalyzes the recognition and processing of DNA lesions. UvrA is an ATPase and a DNA-binding protein. A damage recognition complex composed of 2 UvrA and 2 UvrB subunits scans DNA for abnormalities. When the presence of a lesion has been verified by UvrB, the UvrA molecules dissociate. This is UvrABC system protein A from Escherichia coli O6:H1 (strain CFT073 / ATCC 700928 / UPEC).